The primary structure comprises 91 residues: Elongation factor 1-beta (91 aa).

The protein belongs to the EF-1-beta/EF-1-delta family.

Its function is as follows. Promotes the exchange of GDP for GTP in EF-1-alpha/GDP, thus allowing the regeneration of EF-1-alpha/GTP that could then be used to form the ternary complex EF-1-alpha/GTP/AAtRNA. This is Elongation factor 1-beta from Thermococcus onnurineus (strain NA1).